Reading from the N-terminus, the 143-residue chain is Ribonuclease P protein component (143 aa).

The tract at residues 111 to 143 (RVKRKGGGPGGNRRSAPPGSAPLTDDGRLRGEP) is disordered.

Belongs to the RnpA family. Consists of a catalytic RNA component (M1 or rnpB) and a protein subunit.

It carries out the reaction Endonucleolytic cleavage of RNA, removing 5'-extranucleotides from tRNA precursor.. RNaseP catalyzes the removal of the 5'-leader sequence from pre-tRNA to produce the mature 5'-terminus. It can also cleave other RNA substrates such as 4.5S RNA. The protein component plays an auxiliary but essential role in vivo by binding to the 5'-leader sequence and broadening the substrate specificity of the ribozyme. This is Ribonuclease P protein component from Deinococcus geothermalis (strain DSM 11300 / CIP 105573 / AG-3a).